Reading from the N-terminus, the 316-residue chain is UDP-N-acetylenolpyruvoylglucosamine reductase (316 aa).

The 199-residue stretch at 27–225 folds into the FAD-binding PCMH-type domain; that stretch reads VGGKAERFYR…KTAINALLKK (199 aa). R190 is a catalytic residue. S239 (proton donor) is an active-site residue. The active site involves E309.

Belongs to the MurB family. FAD is required as a cofactor.

It localises to the cytoplasm. The catalysed reaction is UDP-N-acetyl-alpha-D-muramate + NADP(+) = UDP-N-acetyl-3-O-(1-carboxyvinyl)-alpha-D-glucosamine + NADPH + H(+). It participates in cell wall biogenesis; peptidoglycan biosynthesis. Cell wall formation. This Coxiella burnetii (strain RSA 331 / Henzerling II) protein is UDP-N-acetylenolpyruvoylglucosamine reductase.